The sequence spans 154 residues: RNA-binding protein PAB1135 (154 aa).

As to quaternary structure, homodimer in solution.

In vitro, binds efficiently double-stranded RNAs in a non-sequence specific manner. The chain is RNA-binding protein PAB1135 from Pyrococcus abyssi (strain GE5 / Orsay).